Here is a 172-residue protein sequence, read N- to C-terminus: Adenine phosphoribosyltransferase (172 aa).

The protein belongs to the purine/pyrimidine phosphoribosyltransferase family. In terms of assembly, homodimer.

It localises to the cytoplasm. It catalyses the reaction AMP + diphosphate = 5-phospho-alpha-D-ribose 1-diphosphate + adenine. The protein operates within purine metabolism; AMP biosynthesis via salvage pathway; AMP from adenine: step 1/1. Its function is as follows. Catalyzes a salvage reaction resulting in the formation of AMP, that is energically less costly than de novo synthesis. This is Adenine phosphoribosyltransferase from Methanococcus maripaludis (strain DSM 14266 / JCM 13030 / NBRC 101832 / S2 / LL).